Consider the following 178-residue polypeptide: CDP-archaeol synthase (178 aa).

The next 5 membrane-spanning stretches (helical) occupy residues 3–23, 56–76, 87–107, 123–145, and 150–169; these read LLLL…ANAV, FFGI…VILY, LFGY…GDML, APIL…FYPL, and IVLL…IIAY.

Belongs to the CDP-archaeol synthase family. Mg(2+) is required as a cofactor.

It localises to the cell membrane. The catalysed reaction is 2,3-bis-O-(geranylgeranyl)-sn-glycerol 1-phosphate + CTP + H(+) = CDP-2,3-bis-O-(geranylgeranyl)-sn-glycerol + diphosphate. It functions in the pathway membrane lipid metabolism; glycerophospholipid metabolism. Catalyzes the formation of CDP-2,3-bis-(O-geranylgeranyl)-sn-glycerol (CDP-archaeol) from 2,3-bis-(O-geranylgeranyl)-sn-glycerol 1-phosphate (DGGGP) and CTP. This reaction is the third ether-bond-formation step in the biosynthesis of archaeal membrane lipids. The sequence is that of CDP-archaeol synthase from Methanococcus maripaludis (strain C6 / ATCC BAA-1332).